The following is a 1342-amino-acid chain: DNA-directed RNA polymerase subunit beta (1342 aa).

This sequence belongs to the RNA polymerase beta chain family. As to quaternary structure, the RNAP catalytic core consists of 2 alpha, 1 beta, 1 beta' and 1 omega subunit. When a sigma factor is associated with the core the holoenzyme is formed, which can initiate transcription.

It catalyses the reaction RNA(n) + a ribonucleoside 5'-triphosphate = RNA(n+1) + diphosphate. In terms of biological role, DNA-dependent RNA polymerase catalyzes the transcription of DNA into RNA using the four ribonucleoside triphosphates as substrates. This Wigglesworthia glossinidia brevipalpis protein is DNA-directed RNA polymerase subunit beta.